The primary structure comprises 94 residues: Large ribosomal subunit protein bL25 (94 aa).

Belongs to the bacterial ribosomal protein bL25 family. In terms of assembly, part of the 50S ribosomal subunit; part of the 5S rRNA/L5/L18/L25 subcomplex. Contacts the 5S rRNA. Binds to the 5S rRNA independently of L5 and L18.

Its function is as follows. This is one of the proteins that binds to the 5S RNA in the ribosome where it forms part of the central protuberance. This chain is Large ribosomal subunit protein bL25, found in Cronobacter sakazakii (strain ATCC BAA-894) (Enterobacter sakazakii).